We begin with the raw amino-acid sequence, 306 residues long: Large ribosomal subunit protein uL2m (306 aa).

The N-terminal 60 residues, 1–60, are a transit peptide targeting the mitochondrion; sequence MALRVVTRALGSLSLTPRIAAVPGPSLLPAAQVTNNVLLQLPSASMLLPSRPLLTSVALS.

The protein belongs to the universal ribosomal protein uL2 family. In terms of assembly, component of the mitochondrial ribosome large subunit (39S) which comprises a 16S rRNA and about 50 distinct proteins.

The protein localises to the mitochondrion. This is Large ribosomal subunit protein uL2m (MRPL2) from Bos taurus (Bovine).